The sequence spans 139 residues: Large ribosomal subunit protein uL16 (139 aa).

A compositionally biased stretch (basic residues) spans Met-1–Arg-17. A disordered region spans residues Met-1–Gly-24.

It belongs to the universal ribosomal protein uL16 family. Part of the 50S ribosomal subunit.

Functionally, binds 23S rRNA and is also seen to make contacts with the A and possibly P site tRNAs. The chain is Large ribosomal subunit protein uL16 from Beutenbergia cavernae (strain ATCC BAA-8 / DSM 12333 / CCUG 43141 / JCM 11478 / NBRC 16432 / NCIMB 13614 / HKI 0122).